Here is a 406-residue protein sequence, read N- to C-terminus: Imidazolonepropionase (406 aa).

Fe(3+) contacts are provided by histidine 72 and histidine 74. Residues histidine 72 and histidine 74 each contribute to the Zn(2+) site. Residues arginine 81, tyrosine 144, and histidine 177 each coordinate 4-imidazolone-5-propanoate. Residue tyrosine 144 participates in N-formimidoyl-L-glutamate binding. Histidine 242 lines the Fe(3+) pocket. A Zn(2+)-binding site is contributed by histidine 242. Residue glutamine 245 participates in 4-imidazolone-5-propanoate binding. A Fe(3+)-binding site is contributed by aspartate 317. Aspartate 317 lines the Zn(2+) pocket. N-formimidoyl-L-glutamate is bound by residues asparagine 319 and glycine 321. Residue threonine 322 coordinates 4-imidazolone-5-propanoate.

Belongs to the metallo-dependent hydrolases superfamily. HutI family. It depends on Zn(2+) as a cofactor. Requires Fe(3+) as cofactor.

The protein localises to the cytoplasm. The enzyme catalyses 4-imidazolone-5-propanoate + H2O = N-formimidoyl-L-glutamate. It participates in amino-acid degradation; L-histidine degradation into L-glutamate; N-formimidoyl-L-glutamate from L-histidine: step 3/3. Catalyzes the hydrolytic cleavage of the carbon-nitrogen bond in imidazolone-5-propanoate to yield N-formimidoyl-L-glutamate. It is the third step in the universal histidine degradation pathway. This Yersinia pseudotuberculosis serotype O:1b (strain IP 31758) protein is Imidazolonepropionase.